We begin with the raw amino-acid sequence, 306 residues long: Uricase (306 aa).

Catalysis depends on charge relay system residues Lys5 and Thr65. Thr65, Asp66, Phe175, Arg192, Ile240, Gln241, and Asn267 together coordinate urate. A disordered region spans residues 281–306 (AKVLREPPRPTGYQQFSMDRSDLEEQ).

This sequence belongs to the uricase family.

The enzyme catalyses urate + O2 + H2O = 5-hydroxyisourate + H2O2. The protein operates within purine metabolism; urate degradation; (S)-allantoin from urate: step 1/3. Its function is as follows. Catalyzes the oxidation of uric acid to 5-hydroxyisourate, which is further processed to form (S)-allantoin. This is Uricase from Halalkalicoccus jeotgali (strain DSM 18796 / CECT 7217 / JCM 14584 / KCTC 4019 / B3).